The primary structure comprises 263 residues: Rano class II histocompatibility antigen, B-1 beta chain (263 aa).

Residues 1–27 form the signal peptide; sequence MALQTPSFLLPAAVVVLMVLSSPGTEG. Residues 28–120 form a beta-1 region; the sequence is RDSPRDFVYQ…SEVRTSLRRL (93 aa). Residues 28 to 224 lie on the Extracellular side of the membrane; that stretch reads RDSPRDFVYQ…RAQSESAQSK (197 aa). Cystine bridges form between Cys42-Cys104 and Cys143-Cys199. N-linked (GlcNAc...) asparagine glycosylation occurs at Asn46. The interval 121–214 is beta-2; it reads EQPNVAISLS…SLESPVTVEW (94 aa). Positions 123 to 211 constitute an Ig-like C1-type domain; sequence PNVAISLSRT…DHPSLESPVT (89 aa). Residues 215–224 form a connecting peptide region; the sequence is RAQSESAQSK. The chain crosses the membrane as a helical span at residues 225 to 245; the sequence is MLSGIGGFVLGVIFLGLGLFI. The Cytoplasmic segment spans residues 246–263; that stretch reads RHKRQKGPRGPPPAGLLQ. Residue Lys251 forms a Glycyl lysine isopeptide (Lys-Gly) (interchain with G-Cter in ubiquitin) linkage.

It belongs to the MHC class II family.

The protein localises to the membrane. Functionally, involved in the presentation of foreign antigens to the immune system. The protein is Rano class II histocompatibility antigen, B-1 beta chain (RT1-Bb) of Rattus norvegicus (Rat).